An 89-amino-acid polypeptide reads, in one-letter code: Small ribosomal subunit protein bS18 (89 aa).

Belongs to the bacterial ribosomal protein bS18 family. As to quaternary structure, part of the 30S ribosomal subunit. Forms a tight heterodimer with protein bS6.

Binds as a heterodimer with protein bS6 to the central domain of the 16S rRNA, where it helps stabilize the platform of the 30S subunit. This is Small ribosomal subunit protein bS18 from Treponema denticola (strain ATCC 35405 / DSM 14222 / CIP 103919 / JCM 8153 / KCTC 15104).